Consider the following 265-residue polypeptide: Upstream stimulatory factor (265 aa).

Over residues 1–18 (MDVQDHTLDQGPQDKDKD) the composition is skewed to basic and acidic residues. Disordered regions lie at residues 1–21 (MDVQ…DLEE) and 119–149 (ASAA…AAGG). The span at 134–144 (GEQQPGITQPS) shows a compositional bias: polar residues. The bHLH domain maps to 190-245 (RRRATHNEVERRRRDKINNWIVKLSKIIPDCNIDHSKQGQSKGGILTKTCDYIHDL).

As to quaternary structure, efficient DNA binding requires dimerization with another bHLH protein. Binds DNA as a homodimer or a heterodimer. In terms of tissue distribution, enriched in ectodermal tissue.

It is found in the nucleus. May act as a transcription factor which recognizes the CACGTG motif on SPEC gene promoters. This is Upstream stimulatory factor from Strongylocentrotus purpuratus (Purple sea urchin).